Consider the following 571-residue polypeptide: DExH-box ATP-dependent RNA helicase DExH16, mitochondrial (571 aa).

The N-terminal 56 residues, 1–56 (MAYSVVRLRKVSALGISRVLQADKGSLWRFHFEPEFGDLLRLGVLTRNYRKNSGSP), are a transit peptide targeting the mitochondrion. The Helicase ATP-binding domain occupies 83-212 (IARKKKRKVI…HLCGDPAVVP (130 aa)). ATP is bound at residue 96–103 (GPTNSGKT). The short motif at 176-179 (DEIQ) is the DEIH box; degenerate element. Positions 213-399 (LVEDILKVTG…GLFPTFDLLS (187 aa)) constitute a Helicase C-terminal domain.

This sequence belongs to the DExH box helicase family. Homodimer; in free form. Component of the mitochondrial degradosome (mtEXO) complex which is a heteropentamer containing 2 copies of SUPV3L1 and 3 copies of PNPT1. It depends on Mg(2+) as a cofactor. Requires Mn(2+) as cofactor. As to expression, weakly expressed.

Its subcellular location is the nucleus. It is found in the mitochondrion matrix. The protein localises to the mitochondrion nucleoid. The enzyme catalyses ATP + H2O = ADP + phosphate + H(+). With respect to regulation, activated by the presence of mitochondrial RNA. Major helicase player in mitochondrial RNA metabolism. Component of the mitochondrial degradosome (mtEXO) complex, that degrades 3' overhang double-stranded RNA with a 3'-to-5' directionality in an ATP-dependent manner. ATPase and ATP-dependent multisubstrate helicase, able to unwind double-stranded (ds) DNA and RNA, and RNA/DNA heteroduplexes in the 5'-to-3' direction. Plays a role in the RNA surveillance system in mitochondria; regulates the stability of mature mRNAs, the removal of aberrantly formed mRNAs and the rapid degradation of non coding processing intermediates. Required during pollen development. The sequence is that of DExH-box ATP-dependent RNA helicase DExH16, mitochondrial from Arabidopsis thaliana (Mouse-ear cress).